We begin with the raw amino-acid sequence, 299 residues long: ATP phosphoribosyltransferase (299 aa).

This sequence belongs to the ATP phosphoribosyltransferase family. Long subfamily. Equilibrium between an active dimeric form, an inactive hexameric form and higher aggregates. Interconversion between the various forms is largely reversible and is influenced by the natural substrates and inhibitors of the enzyme. The cofactor is Mg(2+).

The protein localises to the cytoplasm. It catalyses the reaction 1-(5-phospho-beta-D-ribosyl)-ATP + diphosphate = 5-phospho-alpha-D-ribose 1-diphosphate + ATP. The protein operates within amino-acid biosynthesis; L-histidine biosynthesis; L-histidine from 5-phospho-alpha-D-ribose 1-diphosphate: step 1/9. With respect to regulation, feedback inhibited by histidine. Catalyzes the condensation of ATP and 5-phosphoribose 1-diphosphate to form N'-(5'-phosphoribosyl)-ATP (PR-ATP). Has a crucial role in the pathway because the rate of histidine biosynthesis seems to be controlled primarily by regulation of HisG enzymatic activity. This Proteus mirabilis (strain HI4320) protein is ATP phosphoribosyltransferase.